The following is a 323-amino-acid chain: Beta-ketoacyl-[acyl-carrier-protein] synthase III (323 aa).

Active-site residues include Cys-114 and His-250. Residues 251-255 (QANIR) are ACP-binding. Asn-280 is an active-site residue.

This sequence belongs to the thiolase-like superfamily. FabH family. As to quaternary structure, homodimer.

It localises to the cytoplasm. It carries out the reaction malonyl-[ACP] + acetyl-CoA + H(+) = 3-oxobutanoyl-[ACP] + CO2 + CoA. It functions in the pathway lipid metabolism; fatty acid biosynthesis. In terms of biological role, catalyzes the condensation reaction of fatty acid synthesis by the addition to an acyl acceptor of two carbons from malonyl-ACP. Catalyzes the first condensation reaction which initiates fatty acid synthesis and may therefore play a role in governing the total rate of fatty acid production. Possesses both acetoacetyl-ACP synthase and acetyl transacylase activities. Its substrate specificity determines the biosynthesis of branched-chain and/or straight-chain of fatty acids. The polypeptide is Beta-ketoacyl-[acyl-carrier-protein] synthase III (Alkalilimnicola ehrlichii (strain ATCC BAA-1101 / DSM 17681 / MLHE-1)).